Here is a 207-residue protein sequence, read N- to C-terminus: Cytochrome c biogenesis ATP-binding export protein CcmA (207 aa).

The ABC transporter domain occupies 4-207 (LEARELLCER…RISLTQTGAA (204 aa)). 36–43 (GSNGAGKT) lines the ATP pocket.

Belongs to the ABC transporter superfamily. CcmA exporter (TC 3.A.1.107) family. The complex is composed of two ATP-binding proteins (CcmA) and two transmembrane proteins (CcmB).

It localises to the cell inner membrane. It catalyses the reaction heme b(in) + ATP + H2O = heme b(out) + ADP + phosphate + H(+). In terms of biological role, part of the ABC transporter complex CcmAB involved in the biogenesis of c-type cytochromes; once thought to export heme, this seems not to be the case, but its exact role is uncertain. Responsible for energy coupling to the transport system. The polypeptide is Cytochrome c biogenesis ATP-binding export protein CcmA (Escherichia coli O6:H1 (strain CFT073 / ATCC 700928 / UPEC)).